The chain runs to 185 residues: NEDD8-conjugating enzyme UBE2F (185 aa).

Positions methionine 1–serine 21 are disordered. The segment at methionine 1 to arginine 29 is interaction with uba3. Positions valine 32–arginine 185 constitute a UBC core domain. The active-site Glycyl thioester intermediate is cysteine 116.

The protein belongs to the ubiquitin-conjugating enzyme family. UBE2F subfamily.

The enzyme catalyses [E1 NEDD8-activating enzyme]-S-[NEDD8 protein]-yl-L-cysteine + [E2 NEDD8-conjugating enzyme]-L-cysteine = [E1 NEDD8-activating enzyme]-L-cysteine + [E2 NEDD8-conjugating enzyme]-S-[NEDD8-protein]-yl-L-cysteine.. The protein operates within protein modification; protein neddylation. Its function is as follows. Accepts the ubiquitin-like protein NEDD8 from the UBA3-NAE1 E1 complex and catalyzes its covalent attachment to other proteins. Together with the E3 ubiquitin ligase rnf7/rbx2, specifically neddylates cullin-5 (cul5). Does not neddylate cul1, cul2, cul3, cul4a or cul4b. The polypeptide is NEDD8-conjugating enzyme UBE2F (ube2f) (Xenopus laevis (African clawed frog)).